A 1693-amino-acid polypeptide reads, in one-letter code: Putative stoned B-like protein (1693 aa).

The span at 1–12 (MSWRDRDFDPHG) shows a compositional bias: basic and acidic residues. Disordered stretches follow at residues 1–54 (MSWR…ELPA), 222–322 (NQIP…VEKS), 334–371 (TVEI…PTFS), 383–438 (KEMT…DPNA), 585–807 (GDYH…TSAA), 841–869 (KKME…DEED), and 899–1024 (PVKE…FVAD). Residues 26–39 (SSSERAASMRAMRS) are compositionally biased toward low complexity. 2 stretches are compositionally biased toward basic and acidic residues: residues 279–301 (MEDK…KEET) and 311–322 (TTEKHQNEVEKS). The segment covering 360–371 (EEEEDDDLPTFS) has biased composition (acidic residues). The segment covering 393 to 412 (ENVENEKQEDTHISEGHVEY) has biased composition (basic and acidic residues). The segment covering 596-615 (DENSTSAISGYEQNGASTSL) has biased composition (polar residues). Over residues 632–643 (YYQGQEYQQEYY) the composition is skewed to low complexity. Positions 684 to 686 (DPF) match the DPF 1 motif. Positions 708 to 722 (SPTPEASSSTGTSAP) are enriched in low complexity. Residues 745–760 (PPRPPPAARPPPPRPA) are compositionally biased toward pro residues. Positions 786-807 (KVSTAVKSTESTLKNLEETSAA) are enriched in polar residues. Over residues 899–913 (PVKEIKKAPEIRRVD) the composition is skewed to basic and acidic residues. Short sequence motifs (DPF) lie at residues 1006–1008 (DPF), 1024–1026 (DPF), and 1039–1041 (DPF). The interval 1062 to 1095 (ANAENEDDFYNGRQSPTLSTPTPEGGSPISQQRP) is disordered. Residues 1073 to 1095 (GRQSPTLSTPTPEGGSPISQQRP) show a composition bias toward polar residues. The region spanning 1136–1283 (GWDLMVRHPI…KCKITRTAKP (148 aa)) is the SHD domain. Positions 1287-1606 (QDEVQIHCYD…AKYQYKVEID (320 aa)) constitute an MHD domain. The interval 1633 to 1693 (ELHQPTFNPS…IQIDMKNYGY (61 aa)) is disordered. The span at 1637–1651 (PTFNPSTQESDTQQG) shows a compositional bias: polar residues.

This sequence belongs to the Stoned B family.

It localises to the cytoplasm. Its function is as follows. Potential adapter protein, which may be involved in endocytic vesicle recycling of synaptic vesicles. This Caenorhabditis elegans protein is Putative stoned B-like protein (unc-41).